The sequence spans 450 residues: Eukaryotic translation initiation factor 3 subunit E (450 aa).

The 170-residue stretch at 255–424 (TELFFSPAYI…GTVIMNHPPQ (170 aa)) folds into the PCI domain.

It belongs to the eIF-3 subunit E family. In terms of assembly, component of the eukaryotic translation initiation factor 3 (eIF-3) complex.

It localises to the cytoplasm. Component of the eukaryotic translation initiation factor 3 (eIF-3) complex, which is involved in protein synthesis of a specialized repertoire of mRNAs and, together with other initiation factors, stimulates binding of mRNA and methionyl-tRNAi to the 40S ribosome. The eIF-3 complex specifically targets and initiates translation of a subset of mRNAs involved in cell proliferation. This Aspergillus clavatus (strain ATCC 1007 / CBS 513.65 / DSM 816 / NCTC 3887 / NRRL 1 / QM 1276 / 107) protein is Eukaryotic translation initiation factor 3 subunit E (int6).